Here is a 462-residue protein sequence, read N- to C-terminus: Fumarate hydratase class II (462 aa).

Substrate-binding positions include Ser97–Thr99, His128–Asp131, Ser138–Asn140, and Thr186. Catalysis depends on His187, which acts as the Proton donor/acceptor. Residue Ser317 is part of the active site. Substrate contacts are provided by residues Ser318 and Lys323–Asn325.

It belongs to the class-II fumarase/aspartase family. Fumarase subfamily. Homotetramer.

The protein resides in the cytoplasm. It carries out the reaction (S)-malate = fumarate + H2O. It participates in carbohydrate metabolism; tricarboxylic acid cycle; (S)-malate from fumarate: step 1/1. Functionally, involved in the TCA cycle. Catalyzes the stereospecific interconversion of fumarate to L-malate. The chain is Fumarate hydratase class II from Neisseria meningitidis serogroup A / serotype 4A (strain DSM 15465 / Z2491).